A 290-amino-acid chain; its full sequence is Membrane-spanning 4-domains subfamily A member 8 (290 aa).

A compositionally biased stretch (polar residues) spans Met1–Lys21. Residues Met1–Pro25 form a disordered region. Over Met1–Gln108 the chain is Cytoplasmic. Residues Val109–Ile129 traverse the membrane as a helical segment. Topologically, residues Thr130–Pro138 are extracellular. The chain crosses the membrane as a helical span at residues Val139 to Leu159. Over Ser160–Asn174 the chain is Cytoplasmic. The chain crosses the membrane as a helical span at residues Gly175 to Ile195. The Extracellular portion of the chain corresponds to Thr196–Thr220. A helical transmembrane segment spans residues Gly221 to Val241. Topologically, residues Ser242–Arg290 are cytoplasmic.

It belongs to the MS4A family. Expressed strongly in intestine and colon and minimally in lung and ovary.

It localises to the membrane. Its function is as follows. May be involved in signal transduction as a component of a multimeric receptor complex. The protein is Membrane-spanning 4-domains subfamily A member 8 (Ms4a8) of Mus musculus (Mouse).